The sequence spans 415 residues: Corticotropin-releasing factor receptor 1 (415 aa).

An N-terminal signal peptide occupies residues 1–24; sequence MLLAKTPCLLLVQVIAAGISFALT. The Extracellular portion of the chain corresponds to 25 to 111; sequence SLQDQCETLQ…CQEILKQEKK (87 aa). 3 cysteine pairs are disulfide-bonded: C30/C54, C44/C87, and C68/C102. Residues N38, N45, N78, and N90 are each glycosylated (N-linked (GlcNAc...) asparagine). A helical membrane pass occupies residues 112–142; that stretch reads TKVHYHIAIVINFLGHSISLCALLVAFILFL. Topologically, residues 143–149 are cytoplasmic; the sequence is RLRSIRC. Residues 150–174 traverse the membrane as a helical segment; that stretch reads LRNIIHWNLITAFILRNVTWFVMQL. The Extracellular portion of the chain corresponds to 175-189; sequence TLSHEAHDSNVVWCR. A disulfide bridge connects residues C188 and C258. The chain crosses the membrane as a helical span at residues 190-218; the sequence is LVTIAHNYFYVTNFFWMFGEGCYLHTAIV. At 219 to 225 the chain is on the cytoplasmic side; the sequence is LTYSTDK. Residues 226–253 form a helical membrane-spanning segment; sequence LRKWMFICIGWCIPFPIIVAWAIGKLYY. Topologically, residues 254-269 are extracellular; sequence DNEKCWFGKKAGVYTD. The helical transmembrane segment at 270-295 threads the bilayer; it reads FIYQGPVILVLLINFIFLFNIVRILM. At 296 to 306 the chain is on the cytoplasmic side; the sequence is TKLRASTTSET. A helical transmembrane segment spans residues 307 to 331; it reads IQYRKAVKATLVLLPLLGITYMLFF. Residues 332–338 are Extracellular-facing; sequence VTPGEDE. The helical transmembrane segment at 339 to 368 threads the bilayer; the sequence is ISRIVFIYFNSFLQSFQGFFVSVFYCFLNS. Residues 369-415 lie on the Cytoplasmic side of the membrane; sequence EVRSAVRKRWHRWQDKHSIRARVARAMSIPTSPTRISFHSIKQSSAI.

The protein belongs to the G-protein coupled receptor 2 family. As to quaternary structure, interacts (via N-terminal extracellular domain) with CRF and UCN.

The protein localises to the cell membrane. G-protein coupled receptor for CRH (corticotropin-releasing factor) and UCN (urocortin). Has high affinity for CRH and UCN. Ligand binding causes a conformation change that triggers signaling via guanine nucleotide-binding proteins (G proteins) and down-stream effectors, such as adenylate cyclase. Promotes the activation of adenylate cyclase, leading to increased intracellular cAMP levels. This is Corticotropin-releasing factor receptor 1 (crhr1) from Xenopus laevis (African clawed frog).